The primary structure comprises 183 residues: Calmodulin-like protein 3 (183 aa).

4 EF-hand domains span residues 7–42 (EQIA…LGQS), 43–78 (PTEA…KLRD), 80–115 (GAED…LSDP), and 116–151 (LSDD…KRRQ). Residues aspartate 20, aspartate 22, aspartate 24, threonine 26, glutamate 31, aspartate 56, aspartate 58, serine 60, serine 62, glutamate 67, aspartate 93, aspartate 95, asparagine 97, glutamate 104, aspartate 129, aspartate 131, aspartate 133, glutamine 135, and glutamate 140 each coordinate Ca(2+). Residues 154–183 (MEGHGSGGHRSSNSHKKSGCCGPNSSCTIL) form a disordered region. 2 S-palmitoyl cysteine lipidation sites follow: cysteine 173 and cysteine 174. Cysteine methyl ester is present on cysteine 180. Cysteine 180 carries the S-farnesyl cysteine lipid modification. A propeptide spans 181–183 (TIL) (removed in mature form).

Belongs to the calmodulin family.

The protein resides in the membrane. Functionally, potential calcium sensor. In Oryza sativa subsp. japonica (Rice), this protein is Calmodulin-like protein 3 (CML3).